The primary structure comprises 128 residues: LIM domain-containing protein 2 (128 aa).

At M1 the chain carries N-acetylmethionine. The segment at 1-25 (MFQAAGAAQATPSHEAKGSSGNSTV) is disordered. Residues 39 to 99 (ETCAACQKTV…KPHFQQLFKS (61 aa)) enclose the LIM zinc-binding domain. Zn(2+) contacts are provided by C41, C44, H62, C65, C68, C71, C89, and H92.

As to quaternary structure, interacts with ILK.

The protein resides in the cytoplasm. It is found in the nucleus. Acts as an activator of the protein-kinase ILK, thereby regulating cell motility. This Rattus norvegicus (Rat) protein is LIM domain-containing protein 2 (Limd2).